Consider the following 208-residue polypeptide: MTGKKRSASSSRWLQEHFSDKYVLQAQKKGLRSRAWFKLDEIQQSDKLFKPGMTIVDLGAAPGGWSQYAVTQIGGQGRIIACDLLPMDPIVGVDFLQGDFRDELVLKALLERVGDSKVQVVMSDMAPNMCGTPAVDIPRSMYLVELALEMSRDVLAPGGSFVVKVFQGEGFEEYLKEIRSLFAKVKVRKPDSSRARSREVYIVATGRK.

S-adenosyl-L-methionine contacts are provided by Gly63, Trp65, Asp83, Asp99, and Asp124. Catalysis depends on Lys164, which acts as the Proton acceptor.

The protein belongs to the class I-like SAM-binding methyltransferase superfamily. RNA methyltransferase RlmE family.

It is found in the cytoplasm. The catalysed reaction is uridine(2552) in 23S rRNA + S-adenosyl-L-methionine = 2'-O-methyluridine(2552) in 23S rRNA + S-adenosyl-L-homocysteine + H(+). Functionally, specifically methylates the uridine in position 2552 of 23S rRNA at the 2'-O position of the ribose in the fully assembled 50S ribosomal subunit. The polypeptide is Ribosomal RNA large subunit methyltransferase E (Enterobacter sp. (strain 638)).